A 97-amino-acid chain; its full sequence is Large ribosomal subunit protein bL27 (97 aa).

A propeptide spanning residues 1 to 12 (MLKMNLANLQLF) is cleaved from the precursor. The segment at 14 to 38 (HKKGGGSTSNGRDSESKRLGAKAAD) is disordered.

This sequence belongs to the bacterial ribosomal protein bL27 family. Post-translationally, the N-terminus is cleaved by ribosomal processing cysteine protease Prp.

The polypeptide is Large ribosomal subunit protein bL27 (Streptococcus mutans serotype c (strain ATCC 700610 / UA159)).